Here is a 269-residue protein sequence, read N- to C-terminus: Hdr-like menaquinol oxidoreductase iron-sulfur subunit 1 (269 aa).

Residues 1–26 constitute a signal peptide (tat-type signal); it reads MMSRRKFLLLTGAAAAGAILTPQISA. Positions 52, 55, 72, 76, 118, 121, 126, 130, 150, 153, 156, 160, 194, 197, 215, and 219 each coordinate [4Fe-4S] cluster. Residues 141-170 enclose the 4Fe-4S ferredoxin-type domain; sequence GIVEIDMHRCIGCRYCMIACPYGARCFNFI.

In terms of assembly, consists of five subunits: an integral membrane subunit, a cytochrome b-like subunit, a cytochrome c subunit and two iron-sulfur subunits. It depends on [4Fe-4S] cluster as a cofactor. In terms of processing, predicted to be exported by the Tat system. The position of the signal peptide cleavage has been experimentally proven.

The protein localises to the cell membrane. Has menaquinol-oxidizing activity. HmeA, HmeB and HmeE subunits may together catalyze electron transfer from menaquinol to cytochrome c. This chain is Hdr-like menaquinol oxidoreductase iron-sulfur subunit 1 (hmeA), found in Archaeoglobus fulgidus (strain ATCC 49558 / DSM 4304 / JCM 9628 / NBRC 100126 / VC-16).